The primary structure comprises 326 residues: Acetyl-coenzyme A carboxylase carboxyl transferase subunit beta (326 aa).

The CoA carboxyltransferase N-terminal domain maps to 32-301; that stretch reads LWTKCPACGV…ILPPLNADSN (270 aa). The Zn(2+) site is built by C36, C39, C55, and C58. The C4-type zinc finger occupies 36-58; it reads CPACGVLTYTKDLQGNWMVCVEC.

Belongs to the AccD/PCCB family. In terms of assembly, acetyl-CoA carboxylase is a heterohexamer composed of biotin carboxyl carrier protein (AccB), biotin carboxylase (AccC) and two subunits each of ACCase subunit alpha (AccA) and ACCase subunit beta (AccD). The cofactor is Zn(2+).

The protein resides in the cytoplasm. It carries out the reaction N(6)-carboxybiotinyl-L-lysyl-[protein] + acetyl-CoA = N(6)-biotinyl-L-lysyl-[protein] + malonyl-CoA. It functions in the pathway lipid metabolism; malonyl-CoA biosynthesis; malonyl-CoA from acetyl-CoA: step 1/1. Functionally, component of the acetyl coenzyme A carboxylase (ACC) complex. Biotin carboxylase (BC) catalyzes the carboxylation of biotin on its carrier protein (BCCP) and then the CO(2) group is transferred by the transcarboxylase to acetyl-CoA to form malonyl-CoA. This is Acetyl-coenzyme A carboxylase carboxyl transferase subunit beta from Synechocystis sp. (strain ATCC 27184 / PCC 6803 / Kazusa).